The following is an 88-amino-acid chain: Small ribosomal subunit protein uS15c (88 aa).

The protein belongs to the universal ribosomal protein uS15 family. In terms of assembly, part of the 30S ribosomal subunit.

The protein localises to the plastid. The protein resides in the chloroplast. In Pinus koraiensis (Korean pine), this protein is Small ribosomal subunit protein uS15c (rps15).